Consider the following 468-residue polypeptide: Protein NEN1 (468 aa).

The Exonuclease domain maps to 11–172 (FFDVETTVPK…DDVRMNLEVL (162 aa)). Residues aspartate 13 and glutamate 15 each coordinate Mg(2+). The active-site Proton donor/acceptor is the histidine 159. Position 164 (aspartate 164) interacts with Mg(2+).

The cofactor is Mg(2+). Expressed in the sieve elements and phloem pole pericycle cells.

The protein resides in the cytoplasm. The protein localises to the nucleus. Functionally, probable exonuclease involved in enuclation of sieve elements. This is Protein NEN1 from Arabidopsis thaliana (Mouse-ear cress).